The following is a 352-amino-acid chain: MGGLYSEYLNPEKVQEHYNYTKETLDMQETPSRKVASAFIIILCCAIVVENLLVLIAVARNSKFHSAMYLFLGNLAASDLLAGVAFVANTLLSGPVTLSLTPLQWFAREGSAFITLSASVFSLLAIAIERQVAIAKVKLYGSDKSCRMLMLIGASWLISLILGGLPILGWNCLDHLEACSTVLPLYAKHYVLCVVTIFSVILLAIVALYVRIYFVVRSSHADVAGPQTLALLKTVTIVLGVFIICWLPAFSILLLDSTCPVRACPVLYKAHYFFAFATLNSLLNPVIYTWRSRDLRREVLRPLLCWRQGKGATGRRGGNPGHRLLPLRSSSSLERGLHMPTSPTFLEGNTVV.

Residues 1–34 lie on the Extracellular side of the membrane; sequence MGGLYSEYLNPEKVQEHYNYTKETLDMQETPSRK. A glycan (N-linked (GlcNAc...) asparagine) is linked at Asn19. Residues 35–59 form a helical membrane-spanning segment; sequence VASAFIIILCCAIVVENLLVLIAVA. At 60–66 the chain is on the cytoplasmic side; that stretch reads RNSKFHS. Residues 67–95 form a helical membrane-spanning segment; that stretch reads AMYLFLGNLAASDLLAGVAFVANTLLSGP. At 96–109 the chain is on the extracellular side; the sequence is VTLSLTPLQWFARE. A helical membrane pass occupies residues 110 to 128; it reads GSAFITLSASVFSLLAIAI. Residues 129–147 lie on the Cytoplasmic side of the membrane; it reads ERQVAIAKVKLYGSDKSCR. A helical membrane pass occupies residues 148 to 173; it reads MLMLIGASWLISLILGGLPILGWNCL. Over 174 to 189 the chain is Extracellular; it reads DHLEACSTVLPLYAKH. The chain crosses the membrane as a helical span at residues 190 to 210; sequence YVLCVVTIFSVILLAIVALYV. Residues 211–233 are Cytoplasmic-facing; the sequence is RIYFVVRSSHADVAGPQTLALLK. Residues 234–255 form a helical membrane-spanning segment; that stretch reads TVTIVLGVFIICWLPAFSILLL. At 256-271 the chain is on the extracellular side; sequence DSTCPVRACPVLYKAH. Residues 272-292 traverse the membrane as a helical segment; that stretch reads YFFAFATLNSLLNPVIYTWRS. Over 293-352 the chain is Cytoplasmic; that stretch reads RDLRREVLRPLLCWRQGKGATGRRGGNPGHRLLPLRSSSSLERGLHMPTSPTFLEGNTVV. Cys305 is lipidated: S-palmitoyl cysteine.

This sequence belongs to the G-protein coupled receptor 1 family. In terms of tissue distribution, expressed in all developing tissues with highest levels detected in primitive, transformed cells. Relative abundance: lung &gt; kidney = skin = gut &gt; spleen &gt; brain &gt; liver.

Its subcellular location is the cell membrane. In terms of biological role, receptor for the lysosphingolipid sphingosine 1-phosphate (S1P). S1P is a bioactive lysophospholipid that elicits diverse physiological effects on most types of cells and tissues. Receptor for the chemokine-like protein FAM19A5. Mediates the inhibitory effect of FAM19A5 on vascular smooth muscle cell proliferation and migration. In lymphoid follicles, couples the binding of S1P to the activation of GNA13 and downstream inhibition of AKT activation leading to suppression of germinal center (GC) B cell growth and migration outside the GC niche. The protein is Sphingosine 1-phosphate receptor 2 (S1pr2) of Rattus norvegicus (Rat).